Reading from the N-terminus, the 304-residue chain is Nucleotide-binding protein SH2124 (304 aa).

Residue 19–26 participates in ATP binding; it reads GLSGAGKS. A GTP-binding site is contributed by 70–73; sequence DLRG.

It belongs to the RapZ-like family.

In terms of biological role, displays ATPase and GTPase activities. The chain is Nucleotide-binding protein SH2124 from Staphylococcus haemolyticus (strain JCSC1435).